The sequence spans 332 residues: Cell growth regulator with RING finger domain protein 1 (332 aa).

Residues 274-309 (CVVCQNGGVNWVLLPCRHACLCDSCVRYFKQCPMCR) form an RING-type zinc finger.

The protein localises to the nucleus. It is found in the endoplasmic reticulum. Functionally, able to inhibit growth in several cell lines. The sequence is that of Cell growth regulator with RING finger domain protein 1 (Cgrrf1) from Mus musculus (Mouse).